A 902-amino-acid polypeptide reads, in one-letter code: Cytosolic 10-formyltetrahydrofolate dehydrogenase (902 aa).

The segment at Met1 to Asp310 is hydrolase domain. A (6R)-10-formyltetrahydrofolate-binding site is contributed by Gln88–Ile90. His106 functions as the Proton donor in the catalytic mechanism. Asp142 contacts (6R)-10-formyltetrahydrofolate. The 78-residue stretch at Glu318 to Met395 folds into the Carrier domain. O-(pantetheine 4'-phosphoryl)serine is present on Ser354. The tract at residues Thr417–Tyr902 is aldehyde dehydrogenase domain. Residues Ile571 to Trp573, Lys597 to Gln600, Gly630 to Gln635, Gly650 to Ser651, and Glu673 to Leu674 contribute to the NADP(+) site. The active-site Proton acceptor is Glu673. Cys707 (proton donor) is an active-site residue. Residues Lys757 and Glu804–Phe806 each bind NADP(+).

It in the N-terminal section; belongs to the GART family. The protein in the C-terminal section; belongs to the aldehyde dehydrogenase family. ALDH1L subfamily. Homotetramer. Phosphopantetheinylation at Ser-354 by AASDHPPT is required for the formyltetrahydrofolate dehydrogenase activity.

The protein localises to the cytoplasm. The protein resides in the cytosol. The enzyme catalyses (6R)-10-formyltetrahydrofolate + NADP(+) + H2O = (6S)-5,6,7,8-tetrahydrofolate + CO2 + NADPH + H(+). Functionally, cytosolic 10-formyltetrahydrofolate dehydrogenase that catalyzes the NADP(+)-dependent conversion of 10-formyltetrahydrofolate to tetrahydrofolate and carbon dioxide. May also have an NADP(+)-dependent aldehyde dehydrogenase activity towards formaldehyde, acetaldehyde, propionaldehyde, and benzaldehyde. The sequence is that of Cytosolic 10-formyltetrahydrofolate dehydrogenase (aldh1l1) from Xenopus laevis (African clawed frog).